The following is a 78-amino-acid chain: Large ribosomal subunit protein bL28 (78 aa).

Residues 1 to 20 (MSRVCQVTGKRPVTGNNRSH) form a disordered region.

It belongs to the bacterial ribosomal protein bL28 family.

In Vibrio atlanticus (strain LGP32) (Vibrio splendidus (strain Mel32)), this protein is Large ribosomal subunit protein bL28.